A 284-amino-acid chain; its full sequence is NAD kinase (284 aa).

The active-site Proton acceptor is Asp61. Residues 61–62, Arg66, 136–137, Arg147, Lys164, Asp166, and Leu201 each bind NAD(+); these read DG and ND.

It belongs to the NAD kinase family. It depends on a divalent metal cation as a cofactor.

It localises to the cytoplasm. It catalyses the reaction NAD(+) + ATP = ADP + NADP(+) + H(+). In terms of biological role, involved in the regulation of the intracellular balance of NAD and NADP, and is a key enzyme in the biosynthesis of NADP. Catalyzes specifically the phosphorylation on 2'-hydroxyl of the adenosine moiety of NAD to yield NADP. This chain is NAD kinase, found in Dehalococcoides mccartyi (strain CBDB1).